The primary structure comprises 706 residues: Polyribonucleotide nucleotidyltransferase (706 aa).

D486 and D492 together coordinate Mg(2+). A KH domain is found at 552–611 (PRIIAMKINPEKIRDVIGKGGAVIRALTEETGTQIDIQEDGSVKIACTSMEAGELAKKRI). Positions 621–689 (GKVYEGPVIK…EKGRLRLSMK (69 aa)) constitute an S1 motif domain.

Belongs to the polyribonucleotide nucleotidyltransferase family. Requires Mg(2+) as cofactor.

The protein resides in the cytoplasm. The catalysed reaction is RNA(n+1) + phosphate = RNA(n) + a ribonucleoside 5'-diphosphate. Involved in mRNA degradation. Catalyzes the phosphorolysis of single-stranded polyribonucleotides processively in the 3'- to 5'-direction. The sequence is that of Polyribonucleotide nucleotidyltransferase from Thiobacillus denitrificans (strain ATCC 25259 / T1).